Reading from the N-terminus, the 369-residue chain is UDP-N-acetylenolpyruvoylglucosamine reductase (369 aa).

The 174-residue stretch at 29–202 folds into the FAD-binding PCMH-type domain; that stretch reads VGPIARRVIT…LEVEFALDPS (174 aa). The active site involves arginine 176. Serine 257 (proton donor) is an active-site residue. Glutamate 361 is a catalytic residue.

This sequence belongs to the MurB family. FAD is required as a cofactor.

The protein localises to the cytoplasm. The catalysed reaction is UDP-N-acetyl-alpha-D-muramate + NADP(+) = UDP-N-acetyl-3-O-(1-carboxyvinyl)-alpha-D-glucosamine + NADPH + H(+). The protein operates within cell wall biogenesis; peptidoglycan biosynthesis. Cell wall formation. The chain is UDP-N-acetylenolpyruvoylglucosamine reductase from Mycobacterium tuberculosis (strain ATCC 25177 / H37Ra).